The following is a 133-amino-acid chain: Phosphoribosyl-AMP cyclohydrolase (133 aa).

Asp82 contributes to the Mg(2+) binding site. A Zn(2+)-binding site is contributed by Cys83. Mg(2+) is bound by residues Asp84 and Asp86. Positions 99 and 106 each coordinate Zn(2+).

The protein belongs to the PRA-CH family. As to quaternary structure, homodimer. Mg(2+) is required as a cofactor. Zn(2+) serves as cofactor.

It localises to the cytoplasm. It carries out the reaction 1-(5-phospho-beta-D-ribosyl)-5'-AMP + H2O = 1-(5-phospho-beta-D-ribosyl)-5-[(5-phospho-beta-D-ribosylamino)methylideneamino]imidazole-4-carboxamide. It functions in the pathway amino-acid biosynthesis; L-histidine biosynthesis; L-histidine from 5-phospho-alpha-D-ribose 1-diphosphate: step 3/9. Catalyzes the hydrolysis of the adenine ring of phosphoribosyl-AMP. In Rhodospirillum centenum (strain ATCC 51521 / SW), this protein is Phosphoribosyl-AMP cyclohydrolase.